A 348-amino-acid chain; its full sequence is Phosphoribosylformylglycinamidine cyclo-ligase (348 aa).

Belongs to the AIR synthase family.

It localises to the cytoplasm. The enzyme catalyses 2-formamido-N(1)-(5-O-phospho-beta-D-ribosyl)acetamidine + ATP = 5-amino-1-(5-phospho-beta-D-ribosyl)imidazole + ADP + phosphate + H(+). It functions in the pathway purine metabolism; IMP biosynthesis via de novo pathway; 5-amino-1-(5-phospho-D-ribosyl)imidazole from N(2)-formyl-N(1)-(5-phospho-D-ribosyl)glycinamide: step 2/2. The protein is Phosphoribosylformylglycinamidine cyclo-ligase of Geobacter sulfurreducens (strain ATCC 51573 / DSM 12127 / PCA).